We begin with the raw amino-acid sequence, 228 residues long: Phosphoglycolate phosphatase (228 aa).

Residue aspartate 12 is the Nucleophile of the active site. Mg(2+) contacts are provided by aspartate 12, aspartate 14, and aspartate 177.

The protein belongs to the HAD-like hydrolase superfamily. CbbY/CbbZ/Gph/YieH family. Mg(2+) is required as a cofactor.

The catalysed reaction is 2-phosphoglycolate + H2O = glycolate + phosphate. The protein operates within organic acid metabolism; glycolate biosynthesis; glycolate from 2-phosphoglycolate: step 1/1. Specifically catalyzes the dephosphorylation of 2-phosphoglycolate. Is involved in the dissimilation of the intracellular 2-phosphoglycolate formed during the DNA repair of 3'-phosphoglycolate ends, a major class of DNA lesions induced by oxidative stress. The chain is Phosphoglycolate phosphatase from Vibrio parahaemolyticus serotype O3:K6 (strain RIMD 2210633).